Here is a 287-residue protein sequence, read N- to C-terminus: Glutamate racemase (287 aa).

Positions Met1 to Ala15 are enriched in polar residues. A disordered region spans residues Met1–Arg25. Substrate is bound by residues Asp32–Ser33 and Tyr64–Gly65. The Proton donor/acceptor role is filled by Cys96. Substrate is bound at residue Asn97–Thr98. Cys208 (proton donor/acceptor) is an active-site residue. Thr209–His210 serves as a coordination point for substrate.

The protein belongs to the aspartate/glutamate racemases family.

The catalysed reaction is L-glutamate = D-glutamate. It participates in cell wall biogenesis; peptidoglycan biosynthesis. Its function is as follows. Provides the (R)-glutamate required for cell wall biosynthesis. The protein is Glutamate racemase of Yersinia pseudotuberculosis serotype I (strain IP32953).